Consider the following 92-residue polypeptide: Putative septation protein SpoVG (92 aa).

This sequence belongs to the SpoVG family.

Functionally, could be involved in septation. The sequence is that of Putative septation protein SpoVG from Thermoanaerobacter pseudethanolicus (strain ATCC 33223 / 39E) (Clostridium thermohydrosulfuricum).